The chain runs to 108 residues: Large ribosomal subunit protein uL24 (108 aa).

It belongs to the universal ribosomal protein uL24 family. Part of the 50S ribosomal subunit.

Functionally, one of two assembly initiator proteins, it binds directly to the 5'-end of the 23S rRNA, where it nucleates assembly of the 50S subunit. In terms of biological role, one of the proteins that surrounds the polypeptide exit tunnel on the outside of the subunit. This chain is Large ribosomal subunit protein uL24, found in Citrifermentans bemidjiense (strain ATCC BAA-1014 / DSM 16622 / JCM 12645 / Bem) (Geobacter bemidjiensis).